Consider the following 147-residue polypeptide: Hemoglobin subunit deltaH (147 aa).

The 145-residue stretch at 3-147 (RLTDSEKAEV…MANALAHKYH (145 aa)) folds into the Globin domain. Positions 64 and 93 each coordinate heme b.

The protein belongs to the globin family. Heterotetramer of two delta chains and two alpha chains. In terms of tissue distribution, red blood cells.

This is Hemoglobin subunit deltaH (HBD) from Dendrohyrax dorsalis (Beecroft's tree hyrax).